The primary structure comprises 413 residues: Scarecrow-like protein 21 (413 aa).

Residues 41–413 form the GRAS domain; it reads IVEAISRGDL…RILVSSCAWK (373 aa). A leucine repeat I (LRI) region spans residues 48–108; it reads GDLKLVLVAC…VARLAASGSS (61 aa). The interval 127–192 is VHIID; the sequence is VYVLHEVCPY…GGAPNIRITG (66 aa). Residues 158–162 carry the VHIID motif; sequence IHIID. A leucine repeat II (LRII) region spans residues 201 to 233; it reads TVKKRLEKLAKKFDVPFRFNAVSRPSCEVEVEN. The segment at 242-336 is PFYRE; that stretch reads LGVNFAYMLH…QHCMARDVVN (95 aa). Positions 339 to 413 are SAW; that stretch reads ACEGAERIER…RILVSSCAWK (75 aa).

This sequence belongs to the GRAS family. Interacts with Meloidogyne incognita 16D10. As to expression, expressed in seedlings, roots, cotyledons, leaves and flowers.

The protein localises to the nucleus. Functionally, probable transcription factor involved in plant development. The sequence is that of Scarecrow-like protein 21 (SCL21) from Arabidopsis thaliana (Mouse-ear cress).